The following is a 201-amino-acid chain: FMN-dependent NADH:quinone oxidoreductase (201 aa).

Residue 92-95 (MWNL) participates in FMN binding.

It belongs to the azoreductase type 1 family. As to quaternary structure, homodimer. Requires FMN as cofactor.

The catalysed reaction is 2 a quinone + NADH + H(+) = 2 a 1,4-benzosemiquinone + NAD(+). The enzyme catalyses N,N-dimethyl-1,4-phenylenediamine + anthranilate + 2 NAD(+) = 2-(4-dimethylaminophenyl)diazenylbenzoate + 2 NADH + 2 H(+). Quinone reductase that provides resistance to thiol-specific stress caused by electrophilic quinones. Its function is as follows. Also exhibits azoreductase activity. Catalyzes the reductive cleavage of the azo bond in aromatic azo compounds to the corresponding amines. The polypeptide is FMN-dependent NADH:quinone oxidoreductase (Caldicellulosiruptor bescii (strain ATCC BAA-1888 / DSM 6725 / KCTC 15123 / Z-1320) (Anaerocellum thermophilum)).